The primary structure comprises 1085 residues: Solute carrier family 12 member 4 (1085 aa).

The Cytoplasmic segment spans residues 1 to 119 (MPHFTVVPVD…RRAAKAPSMG (119 aa)). At serine 24 the chain carries Phosphoserine. Residues 28-46 (YGERAEREDPDGHGNHRES) are compositionally biased toward basic and acidic residues. Positions 28-47 (YGERAEREDPDGHGNHRESS) are disordered. 4 positions are modified to phosphoserine: serine 47, serine 59, serine 81, and serine 88. Residues 120–141 (TLMGVYLPCLQNIFGVILFLRL) traverse the membrane as a discontinuously helical segment. Positions 131 and 132 each coordinate K(+). The Extracellular segment spans residues 142 to 149 (TWMVGTAG). Residues 150-172 (VLQALLIVLICCCCTLLTAISMS) traverse the membrane as a helical segment. Residues 173 to 196 (AIATNGVVPAGGSYFMISRSLGPE) lie on the Cytoplasmic side of the membrane. A helical membrane pass occupies residues 197 to 225 (FGGAVGLCFYLGTTFAAAMYILGAIEILL). Tyrosine 216 contacts K(+). Residues 226-248 (TYIAPPAAIFYPSGTHDTSNATL) are Extracellular-facing. Asparagine 245 carries N-linked (GlcNAc...) asparagine glycosylation. 2 consecutive transmembrane segments (helical) span residues 249-271 (NNMR…VGVK) and 272-297 (YVNK…GGIK). Residues 298–419 (SMFDPPVFPV…LYVVADIATS (122 aa)) are Extracellular-facing. The cysteines at positions 308 and 323 are disulfide-linked. N-linked (GlcNAc...) asparagine glycans are attached at residues asparagine 312, asparagine 331, and asparagine 347. A disulfide bridge connects residues cysteine 343 and cysteine 353. Residues 420–440 (FTVLVGIFFPSVTGIMAGSNR) form a helical membrane-spanning segment. Positions 429 and 432 each coordinate K(+). Positions 433, 434, and 435 each coordinate chloride. Residues 441 to 450 (SGDLRDAQKS) are Cytoplasmic-facing. The chain crosses the membrane as a helical span at residues 451 to 473 (IPVGTILAIVTTSLVYFSSVVLF). Topologically, residues 474–504 (GACIEGVVLRDKYGDGVSRNLVVGTLAWPSP) are extracellular. A helical transmembrane segment spans residues 505–531 (WVIVVGSFFSTCGAGLQSLTGAPRLLQ). Topologically, residues 532–554 (AIAKDNIIPFLRVFGHGKANGEP) are cytoplasmic. The next 2 helical transmembrane spans lie at 555–575 (TWAL…ASLD) and 576–598 (MVAP…ACAV). Tyrosine 589 lines the chloride pocket. The Cytoplasmic portion of the chain corresponds to 599 to 612 (QTLLRTPNWRPRFK). A run of 2 helical transmembrane segments spans residues 613–635 (YYHW…VSSW) and 636–651 (YYAL…IYKY). Over 652 to 1085 (IEYQGAEKEW…GGREVITIYS (434 aa)) the chain is Cytoplasmic. The scissor helix stretch occupies residues 665 to 681 (IRGLSLSAARYALLRLE). Leucine 697, lysine 699, lysine 707, tyrosine 708, and valine 730 together coordinate ATP. At serine 734 the chain carries Phosphoserine. ATP contacts are provided by glycine 794, tryptophan 795, and tyrosine 797. A phosphoserine mark is found at serine 916 and serine 967. The residue at position 983 (threonine 983) is a Phosphothreonine. Serine 1050 carries the post-translational modification Phosphoserine.

The protein belongs to the SLC12A transporter family. K/Cl co-transporter subfamily. In terms of assembly, homodimer; adopts a domain-swap conformation at the scissor helices connecting the transmembrane domain and C-terminal domain. Heterodimer with other K-Cl cotransporters. In terms of processing, N-glycosylated. Post-translationally, phosphorylated, phosphorylation may regulate transporter activity.

It localises to the cell membrane. It carries out the reaction K(+)(in) + chloride(in) = K(+)(out) + chloride(out). With respect to regulation, inhibited by WNK3. Mediates electroneutral potassium-chloride cotransport when activated by cell swelling. May contribute to cell volume homeostasis in single cells. May be involved in the regulation of basolateral Cl(-) exit in NaCl absorbing epithelia. The chain is Solute carrier family 12 member 4 (SLC12A4) from Oryctolagus cuniculus (Rabbit).